A 408-amino-acid polypeptide reads, in one-letter code: 4-O-methyl-glucuronoyl methylesterase 1 (408 aa).

The first 19 residues, 1–19 (MASSSRFAALLLLALPALA), serve as a signal peptide directing secretion. Intrachain disulfides connect cysteine 31–cysteine 65, cysteine 218–cysteine 354, and cysteine 250–cysteine 326. The short motif at 217-222 (GCSRDG) is the GXSYXG catalytic site motif element. Catalysis depends on serine 219, which acts as the Nucleophile. Positions 223, 265, and 273 each coordinate substrate. N-linked (GlcNAc...) asparagine glycosylation occurs at asparagine 287. Tryptophan 317 is a binding site for substrate. The N-linked (GlcNAc...) asparagine glycan is linked to asparagine 350. The active-site Proton donor/acceptor is the histidine 353. N-linked (GlcNAc...) asparagine glycosylation is found at asparagine 390, asparagine 395, and asparagine 401.

The protein belongs to the carbohydrate esterase 15 (CE15) family.

It is found in the secreted. The catalysed reaction is a 4-O-methyl-alpha-D-glucuronosyl ester derivative + H2O = 4-O-methyl-alpha-D-glucuronate derivative + an alcohol + H(+). Its function is as follows. Glucuronoyl esterase which may play a significant role in biomass degradation, as it is considered to disconnect hemicellulose from lignin through the hydrolysis of the ester bond between 4-O-methyl-D-glucuronic acid residues of glucuronoxylans and aromatic alcohols of lignin. Can hydrolyze benzyl glucuronic acid (BnGlcA), allyl glucuronic acid (allylGlcA) and to a lower degree methyl glucuronic acid (MeGlcA) in vitro. This chain is 4-O-methyl-glucuronoyl methylesterase 1, found in Wolfiporia cocos (strain MD-104) (Brown rot fungus).